A 93-amino-acid chain; its full sequence is Cell division protein CrgA (93 aa).

A run of 2 helical transmembrane segments spans residues valine 31–phenylalanine 51 and leucine 70–methionine 90.

It belongs to the CrgA family.

Its subcellular location is the cell membrane. Its function is as follows. Involved in cell division. This Mycobacterium marinum (strain ATCC BAA-535 / M) protein is Cell division protein CrgA.